Reading from the N-terminus, the 470-residue chain is MNPNQKIICISATGMTLSVVSLLIGIANLGLNIGLHYKVGDTPDVNIPNVNRTNSTTTIINNNTQNNFTNITNIIQNKNEERTFLNLTKPLCEVNSWHILSKDNAIRIGEDAHILVTREPYLSCDPQGCRMFALSQGTTLRGRHANGTIHDRSPFRALVSWEMGQAPSPYNAKVECIGWSSTSCHDGISRMSICMSGPNNNASAVVWYGGRPVTEIPSWAGNILRTQESECVCHKGVCPVVMTDGPATNRAATKIIYFKEGKIQKIEELTGKAQHIEECSCYGAGGVIKCICRDNWKGANRPVITIDPEIMTHTSKYLCSKVLTDTSRPNDPTNGNCDAPITGGSPDPGVKGFAFLDGENSWLGRTISKDSRSGYEMLKVPNAETDTQSGPISHQMIVNNQNWSGYSGAFIDYWANKECFNPCFYVELIRGRPKESSVLWTSNSIVALCGSRERLGSWSWHDGAEIIYFK.

Residues 1–6 (MNPNQK) lie on the Intravirion side of the membrane. Residues 7–27 (IICISATGMTLSVVSLLIGIA) traverse the membrane as a helical segment. The segment at 11–33 (SATGMTLSVVSLLIGIANLGLNI) is involved in apical transport and lipid raft association. Residues 28–470 (NLGLNIGLHY…HDGAEIIYFK (443 aa)) are Virion surface-facing. Residues 36–88 (HYKVGDTPDVNIPNVNRTNSTTTIINNNTQNNFTNITNIIQNKNEERTFLNLT) are hypervariable stalk region. Asparagine 51, asparagine 54, asparagine 62, asparagine 67, asparagine 70, and asparagine 86 each carry an N-linked (GlcNAc...) asparagine; by host glycan. The tract at residues 91–470 (LCEVNSWHIL…HDGAEIIYFK (380 aa)) is head of neuraminidase. Cystine bridges form between cysteine 92–cysteine 419, cysteine 124–cysteine 129, cysteine 184–cysteine 231, cysteine 233–cysteine 238, cysteine 279–cysteine 292, cysteine 281–cysteine 290, cysteine 319–cysteine 337, and cysteine 423–cysteine 449. Arginine 118 lines the substrate pocket. Residue asparagine 146 is glycosylated (N-linked (GlcNAc...) asparagine; by host). The active-site Proton donor/acceptor is the aspartate 151. Position 152 (arginine 152) interacts with substrate. Asparagine 201 carries N-linked (GlcNAc...) asparagine; by host glycosylation. Residue 277 to 278 (EE) participates in substrate binding. Arginine 293 provides a ligand contact to substrate. Residues aspartate 294, glycine 298, and aspartate 325 each coordinate Ca(2+). Residue arginine 372 participates in substrate binding. Asparagine 402 carries N-linked (GlcNAc...) asparagine; by host glycosylation. The Nucleophile role is filled by tyrosine 406.

It belongs to the glycosyl hydrolase 34 family. As to quaternary structure, homotetramer. Ca(2+) serves as cofactor. Post-translationally, N-glycosylated.

Its subcellular location is the virion membrane. The protein resides in the host apical cell membrane. It catalyses the reaction Hydrolysis of alpha-(2-&gt;3)-, alpha-(2-&gt;6)-, alpha-(2-&gt;8)- glycosidic linkages of terminal sialic acid residues in oligosaccharides, glycoproteins, glycolipids, colominic acid and synthetic substrates.. Inhibited by the neuraminidase inhibitors zanamivir (Relenza) and oseltamivir (Tamiflu). These drugs interfere with the release of progeny virus from infected cells and are effective against all influenza strains. Resistance to neuraminidase inhibitors is quite rare. Functionally, catalyzes the removal of terminal sialic acid residues from viral and cellular glycoconjugates. Cleaves off the terminal sialic acids on the glycosylated HA during virus budding to facilitate virus release. Additionally helps virus spread through the circulation by further removing sialic acids from the cell surface. These cleavages prevent self-aggregation and ensure the efficient spread of the progeny virus from cell to cell. Otherwise, infection would be limited to one round of replication. Described as a receptor-destroying enzyme because it cleaves a terminal sialic acid from the cellular receptors. May facilitate viral invasion of the upper airways by cleaving the sialic acid moieties on the mucin of the airway epithelial cells. Likely to plays a role in the budding process through its association with lipid rafts during intracellular transport. May additionally display a raft-association independent effect on budding. Plays a role in the determination of host range restriction on replication and virulence. Sialidase activity in late endosome/lysosome traffic seems to enhance virus replication. This is Neuraminidase from Aves (Pig).